A 440-amino-acid chain; its full sequence is Proline--tRNA ligase (440 aa).

The protein belongs to the class-II aminoacyl-tRNA synthetase family. ProS type 2 subfamily. Homodimer.

The protein resides in the cytoplasm. It catalyses the reaction tRNA(Pro) + L-proline + ATP = L-prolyl-tRNA(Pro) + AMP + diphosphate. Catalyzes the attachment of proline to tRNA(Pro) in a two-step reaction: proline is first activated by ATP to form Pro-AMP and then transferred to the acceptor end of tRNA(Pro). In Methylocella silvestris (strain DSM 15510 / CIP 108128 / LMG 27833 / NCIMB 13906 / BL2), this protein is Proline--tRNA ligase.